The primary structure comprises 187 residues: Phosphatidylethanolamine-binding protein 1 (187 aa).

Phosphoserine is present on serine 13. At threonine 42 the chain carries Phosphothreonine. A phosphoserine mark is found at serine 52, serine 98, and serine 153. The interaction with RAF1 stretch occupies residues 93-134 (KGNDISSGTVLSDYVGSGPPKGTGLHRYVWLVYEQSGPLKCD).

Belongs to the phosphatidylethanolamine-binding protein family. Has a tendency to form dimers by disulfide cross-linking. Interacts with RAF1 and this interaction is enhanced if RAF1 is phosphorylated on residues 'Ser-338', 'Ser-339', 'Tyr-340' and 'Tyr-341'. Interacts with ALOX15; in response to IL13/interleukin-13, prevents the interaction of PEBP1 with RAF1 to activate the ERK signaling cascade.

It localises to the cytoplasm. Functionally, binds ATP, opioids and phosphatidylethanolamine. Has lower affinity for phosphatidylinositol and phosphatidylcholine. Serine protease inhibitor which inhibits thrombin, neuropsin and chymotrypsin but not trypsin, tissue type plasminogen activator and elastase. Involved in the positive regulation of epithelial cell migration. Inhibits the kinase activity of RAF1 by inhibiting its activation and by dissociating the RAF1/MEK complex and acting as a competitive inhibitor of MEK phosphorylation. Its function is as follows. HCNP may be involved in the function of the presynaptic cholinergic neurons of the central nervous system. HCNP increases the production of choline acetyltransferase but not acetylcholinesterase. Seems to be mediated by a specific receptor. This is Phosphatidylethanolamine-binding protein 1 (PEBP1) from Canis lupus familiaris (Dog).